A 228-amino-acid chain; its full sequence is Small ribosomal subunit protein uS2 (228 aa).

Belongs to the universal ribosomal protein uS2 family.

The sequence is that of Small ribosomal subunit protein uS2 from Buchnera aphidicola subsp. Baizongia pistaciae (strain Bp).